The primary structure comprises 277 residues: Large ribosomal subunit protein uL2 (277 aa).

Disordered regions lie at residues 32 to 58 (KSLTKGKVSRAGRDSSGRISVRRRGGG) and 225 to 277 (VAMN…RRNN).

Belongs to the universal ribosomal protein uL2 family. Part of the 50S ribosomal subunit. Forms a bridge to the 30S subunit in the 70S ribosome.

Its function is as follows. One of the primary rRNA binding proteins. Required for association of the 30S and 50S subunits to form the 70S ribosome, for tRNA binding and peptide bond formation. It has been suggested to have peptidyltransferase activity; this is somewhat controversial. Makes several contacts with the 16S rRNA in the 70S ribosome. This is Large ribosomal subunit protein uL2 from Borrelia duttonii (strain Ly).